Consider the following 520-residue polypeptide: GMP synthase [glutamine-hydrolyzing] (520 aa).

Residues 9 to 202 form the Glutamine amidotransferase type-1 domain; the sequence is TILIIDFGSQ…VHRIVGVKPG (194 aa). C86 (nucleophile) is an active-site residue. Active-site residues include H176 and E178. In terms of domain architecture, GMPS ATP-PPase spans 203–395; that stretch reads WTMGAYREQA…LGLPDSFIGR (193 aa). Residue 230-236 participates in ATP binding; sequence SGGVDSS.

As to quaternary structure, homodimer.

It carries out the reaction XMP + L-glutamine + ATP + H2O = GMP + L-glutamate + AMP + diphosphate + 2 H(+). It participates in purine metabolism; GMP biosynthesis; GMP from XMP (L-Gln route): step 1/1. Its function is as follows. Catalyzes the synthesis of GMP from XMP. The chain is GMP synthase [glutamine-hydrolyzing] from Brucella melitensis biotype 2 (strain ATCC 23457).